Consider the following 730-residue polypeptide: Polyribonucleotide nucleotidyltransferase (730 aa).

Positions 489 and 495 each coordinate Mg(2+). The KH domain occupies 556–615 (PRIEVMKIAVDKIREVIGSGGKVIREIVEKTGAKINIEDDGTIKIASASGDAIKAAINWI). The S1 motif domain maps to 625-693 (GQIYEGTVVK…ERGKTRLSMK (69 aa)). Positions 700-730 (GEDLEAKAKAERDAARAAAPAATGDEAGAAE) are disordered. A compositionally biased stretch (basic and acidic residues) spans 703-714 (LEAKAKAERDAA). Residues 715–730 (RAAAPAATGDEAGAAE) are compositionally biased toward low complexity.

The protein belongs to the polyribonucleotide nucleotidyltransferase family. Requires Mg(2+) as cofactor.

The protein localises to the cytoplasm. It carries out the reaction RNA(n+1) + phosphate = RNA(n) + a ribonucleoside 5'-diphosphate. Functionally, involved in mRNA degradation. Catalyzes the phosphorolysis of single-stranded polyribonucleotides processively in the 3'- to 5'-direction. This chain is Polyribonucleotide nucleotidyltransferase, found in Xanthobacter autotrophicus (strain ATCC BAA-1158 / Py2).